The primary structure comprises 398 residues: MEEEEKNPSSIYIVADLLEDIFLRLPLKSILISKSVSKRWRSILESKTFVERRMSLQKKRKILAAYNCKCGWEPRLLPGSSQCKGNEEIVYLHCNAAQPSFTCDGLVCILEPRWIDVLNPWTRQLRRYGFGFGTIFGVGSAFSPRHWAMGFGKDKVTGSYKVVKMCLISFSEICARDPEVEYSVLDVETGEWRMLSPPPYKVFEVRKSECANGSIYWLHKPTERAWTILALDLHKEELHNISVPDMSVTQETFQIVNLEDRLAIANTYTKTEWKLEIWSMDTEVETWTKTYSIDLENRVASRERRNRWFTPVSVSKQGNIVFYDNHKRLFKYYPRKNEILYLSADTCVISPFFENLAPLPQKSTLHTPIIAGEPNAPLTTLVVVGSIWSPLFLFSVKL.

An F-box domain is found at 8 to 55 (PSSIYIVADLLEDIFLRLPLKSILISKSVSKRWRSILESKTFVERRMS).

In Arabidopsis thaliana (Mouse-ear cress), this protein is Putative F-box protein At4g17780.